The sequence spans 148 residues: Large ribosomal subunit protein uL15 (148 aa).

A compositionally biased stretch (basic residues) spans 1–30 (MTHSKRNTRKLRGHVSHGHGRVGKHRKHPG). Positions 1-38 (MTHSKRNTRKLRGHVSHGHGRVGKHRKHPGGRGMAGPE) are disordered.

This sequence belongs to the universal ribosomal protein uL15 family.

This is Large ribosomal subunit protein uL15 (RPL27A) from Euplotes crassus.